Reading from the N-terminus, the 522-residue chain is GMP synthase [glutamine-hydrolyzing] (522 aa).

The Glutamine amidotransferase type-1 domain occupies 9-204; sequence KILILDFGAQ…VVDICGCQTL (196 aa). The active-site Nucleophile is the Cys86. Catalysis depends on residues His178 and Glu180. The GMPS ATP-PPase domain maps to 205–397; sequence WTSANIIEDQ…LGLPHAMVYR (193 aa). 232-238 is an ATP binding site; the sequence is SGGVDSS.

In terms of assembly, homodimer.

The catalysed reaction is XMP + L-glutamine + ATP + H2O = GMP + L-glutamate + AMP + diphosphate + 2 H(+). It participates in purine metabolism; GMP biosynthesis; GMP from XMP (L-Gln route): step 1/1. In terms of biological role, catalyzes the synthesis of GMP from XMP. In Xylella fastidiosa (strain M23), this protein is GMP synthase [glutamine-hydrolyzing].